Reading from the N-terminus, the 145-residue chain is D-aminoacyl-tRNA deacylase (145 aa).

Residues 137-138 (GP) carry the Gly-cisPro motif, important for rejection of L-amino acids motif.

Belongs to the DTD family. In terms of assembly, homodimer.

It is found in the cytoplasm. The catalysed reaction is glycyl-tRNA(Ala) + H2O = tRNA(Ala) + glycine + H(+). It catalyses the reaction a D-aminoacyl-tRNA + H2O = a tRNA + a D-alpha-amino acid + H(+). Its function is as follows. An aminoacyl-tRNA editing enzyme that deacylates mischarged D-aminoacyl-tRNAs. Also deacylates mischarged glycyl-tRNA(Ala), protecting cells against glycine mischarging by AlaRS. Acts via tRNA-based rather than protein-based catalysis; rejects L-amino acids rather than detecting D-amino acids in the active site. By recycling D-aminoacyl-tRNA to D-amino acids and free tRNA molecules, this enzyme counteracts the toxicity associated with the formation of D-aminoacyl-tRNA entities in vivo and helps enforce protein L-homochirality. The polypeptide is D-aminoacyl-tRNA deacylase (Francisella tularensis subsp. novicida (strain U112)).